The sequence spans 245 residues: 1-(5-phosphoribosyl)-5-[(5-phosphoribosylamino)methylideneamino] imidazole-4-carboxamide isomerase (245 aa).

Catalysis depends on aspartate 8, which acts as the Proton acceptor. Residue aspartate 129 is the Proton donor of the active site.

Belongs to the HisA/HisF family.

It is found in the cytoplasm. It catalyses the reaction 1-(5-phospho-beta-D-ribosyl)-5-[(5-phospho-beta-D-ribosylamino)methylideneamino]imidazole-4-carboxamide = 5-[(5-phospho-1-deoxy-D-ribulos-1-ylimino)methylamino]-1-(5-phospho-beta-D-ribosyl)imidazole-4-carboxamide. It functions in the pathway amino-acid biosynthesis; L-histidine biosynthesis; L-histidine from 5-phospho-alpha-D-ribose 1-diphosphate: step 4/9. The polypeptide is 1-(5-phosphoribosyl)-5-[(5-phosphoribosylamino)methylideneamino] imidazole-4-carboxamide isomerase (Pelobacter propionicus (strain DSM 2379 / NBRC 103807 / OttBd1)).